The sequence spans 540 residues: Transcription termination/antitermination protein NusA (540 aa).

One can recognise an S1 motif domain in the interval 144 to 214 (GQVIEARVED…SMWPITLSRS (71 aa)). Positions 319 to 386 (DTSIEIVVPA…QGIFGIKKRR (68 aa)) constitute a KH domain. Residues 457–540 (VAAPTPTPAP…KQTFDNFDDL (84 aa)) are disordered. The segment covering 461-489 (TPTPAPQPTPAPTKVEPVPPPVSVTPKPI) has biased composition (pro residues). Residues 512 to 522 (DDSKTKPEKSS) show a composition bias toward basic and acidic residues. The span at 523-540 (AKTNTPQTKQTFDNFDDL) shows a compositional bias: polar residues.

It belongs to the NusA family. As to quaternary structure, monomer. Binds directly to the core enzyme of the DNA-dependent RNA polymerase and to nascent RNA.

The protein localises to the cytoplasm. Functionally, participates in both transcription termination and antitermination. In Mycoplasma pneumoniae (strain ATCC 29342 / M129 / Subtype 1) (Mycoplasmoides pneumoniae), this protein is Transcription termination/antitermination protein NusA.